Here is a 148-residue protein sequence, read N- to C-terminus: uncharacterized protein (148 aa).

Belongs to the SufE family.

This is an uncharacterized protein from Rhizobium etli (strain ATCC 51251 / DSM 11541 / JCM 21823 / NBRC 15573 / CFN 42).